An 84-amino-acid polypeptide reads, in one-letter code: U4-theraphotoxin-Hhn1a (84 aa).

A signal peptide spans 1–22; the sequence is MKVTLIAIPTCAAVLVLHTTAA. The propeptide occupies 23-47; sequence EELEESQLMEVGMPDTELAAVDEER. Disulfide bonds link C51-C65, C55-C76, and C70-C81.

It belongs to the neurotoxin 12 (Hwtx-2) family. 02 (Hwtx-2) subfamily. As to expression, expressed by the venom gland.

The protein localises to the secreted. In terms of biological role, postsynaptic neurotoxin. The polypeptide is U4-theraphotoxin-Hhn1a (Cyriopagopus hainanus (Chinese bird spider)).